Reading from the N-terminus, the 446-residue chain is D(1A) dopamine receptor (446 aa).

The Extracellular portion of the chain corresponds to 1–23 (MRTLNTSAMDGTGLVVERDFSVR). Asn5 is a glycosylation site (N-linked (GlcNAc...) asparagine). A helical transmembrane segment spans residues 24–49 (ILTACFLSLLILSTLLGNTLVCAAVI). Topologically, residues 50 to 60 (RFRHLRSKVTN) are cytoplasmic. Residues 61 to 87 (FFVISLAVSDLLVAVLVMPWKAVAEIA) form a helical membrane-spanning segment. Over 88 to 96 (GFWPFGSFC) the chain is Extracellular. The cysteines at positions 96 and 186 are disulfide-linked. A helical membrane pass occupies residues 97–119 (NIWVAFDIMCSTASILNLCVISV). Topologically, residues 120-138 (DRYWAISSPFRYERKMTPK) are cytoplasmic. A helical membrane pass occupies residues 139–163 (AAFILISVAWTLSVLISFIPVQLSW). The Extracellular portion of the chain corresponds to 164–192 (HKAKPTSPSDGNATSLAETIDNCDSSLSR). N-linked (GlcNAc...) asparagine glycosylation occurs at Asn175. A helical transmembrane segment spans residues 193-218 (TYAISSSVISFYIPVAIMIVTYTRIY). Residues 219 to 272 (RIAQKQIRRIAALERAAVHAKNCQTTTGNGKPVECSQPESSFKMSFKRETKVLK) are Cytoplasmic-facing. A helical transmembrane segment spans residues 273 to 299 (TLSVIMGVFVCCWLPFFILNCILPFCG). The Extracellular segment spans residues 300-312 (SGETQPFCIDSIT). The helical transmembrane segment at 313 to 337 (FDVFVWFGWANSSLNPIIYAFNADF) threads the bilayer. Residues 338-446 (RKAFSTLLGC…PITQNGQHPT (109 aa)) are Cytoplasmic-facing. 2 S-palmitoyl cysteine lipidation sites follow: Cys347 and Cys351.

It belongs to the G-protein coupled receptor 1 family. Interacts with DNAJC14 via its C-terminus. Interacts with DRD2. Interacts with DORIP1.

It localises to the cell membrane. It is found in the endoplasmic reticulum membrane. Its subcellular location is the cell projection. The protein localises to the cilium membrane. The protein resides in the dendrite. It localises to the dendritic spine. In terms of biological role, dopamine receptor whose activity is mediated by G proteins which activate adenylyl cyclase. The polypeptide is D(1A) dopamine receptor (DRD1) (Macaca mulatta (Rhesus macaque)).